The following is a 211-amino-acid chain: MKDCPDSLPVTSTGVPDGFWTRPVTEIARDLVGMTLLVDGCGGVIVETEAYDRDDPASHSFSGLTRRNASMFGLPGHAYVYRSYGIHWCFNIVCGPVPGGAVLIRALHPMFGLEAMQLRRGAIRLRDLCRGPGRLCQALGITDGMDGLSLCRPPFDLQPCHKTGEASDLIAAGPRIGITRAIETPWRFYQAESVFVSGSRSSRFLINKAGK.

It belongs to the DNA glycosylase MPG family.

In Granulibacter bethesdensis (strain ATCC BAA-1260 / CGDNIH1), this protein is Putative 3-methyladenine DNA glycosylase.